The primary structure comprises 591 residues: Probable anion transporter 4, chloroplastic (591 aa).

Positions 1–38 (MAMGAVLSSRTFASPLSSSGKQHPPQNNKCTCSSPPTR) are disordered. Residues 1–76 (MAMGAVLSSR…LSARFHQPVV (76 aa)) constitute a chloroplast transit peptide. Positions 8-36 (SSRTFASPLSSSGKQHPPQNNKCTCSSPP) are enriched in polar residues. 11 helical membrane-spanning segments follow: residues 184-204 (VVLL…NMSI), 220-240 (VGLI…LGGI), 249-269 (VVLG…PLAA), 271-291 (IGLP…GVAM), 313-333 (LVYS…PLLI), 336-356 (FGWP…FALW), 402-422 (VWAL…LLTW), 440-460 (LLCV…GWIA), 475-495 (KIMQ…LSKV), 531-551 (AGVL…FGTA), and 565-585 (VFQV…VFST).

This sequence belongs to the major facilitator superfamily. Sodium/anion cotransporter (TC 2.A.1.14) family.

It localises to the plastid. It is found in the chloroplast membrane. In terms of biological role, probable anion transporter. In Oryza sativa subsp. japonica (Rice), this protein is Probable anion transporter 4, chloroplastic (PHT4;4).